The following is a 154-amino-acid chain: Terephthalate 1,2-dioxygenase, terminal oxygenase component subunit beta 2 (154 aa).

It belongs to the bacterial ring-hydroxylating dioxygenase beta subunit family. As to quaternary structure, heterotetramer composed of 2 alpha (TphA2I and TphA2II) and 2 beta (TphA3I and TphA3II) subunits. Part of a multicomponent enzyme system composed of a reductase (TphA1I or TphA1II) and a two-subunit oxygenase component (TphA2I or TphA2II and TphA3I or TphA3II). It depends on Fe cation as a cofactor.

It catalyses the reaction terephthalate + NADH + O2 + H(+) = (3S,4R)-3,4-dihydroxycyclohexa-1,5-diene-1,4-dicarboxylate + NAD(+). With respect to regulation, inhibited by EDTA. Component of the terephthalate 1,2-dioxygenase multicomponent enzyme system which catalyzes the dioxygenation of terephthalate (TER/TPA) to 1,2-dihydroxy-3,5-cyclohexadiene-1,4-dicarboxylic acid (DCD). It can also use 2,5-dicarboxypyridine (PDC) and 1,4-napthalenedicarboxylic acid (NDC) as substrates, and preferentially uses NADPH which is the physiological electron donor. The polypeptide is Terephthalate 1,2-dioxygenase, terminal oxygenase component subunit beta 2 (tphA3II) (Comamonas sp).